The primary structure comprises 118 residues: Large ribosomal subunit protein uL18 (118 aa).

It belongs to the universal ribosomal protein uL18 family. In terms of assembly, part of the 50S ribosomal subunit; part of the 5S rRNA/L5/L18/L25 subcomplex. Contacts the 5S and 23S rRNAs.

Its function is as follows. This is one of the proteins that bind and probably mediate the attachment of the 5S RNA into the large ribosomal subunit, where it forms part of the central protuberance. This Campylobacter hominis (strain ATCC BAA-381 / DSM 21671 / CCUG 45161 / LMG 19568 / NCTC 13146 / CH001A) protein is Large ribosomal subunit protein uL18.